Consider the following 233-residue polypeptide: Tetrahydromethanopterin S-methyltransferase subunit D (233 aa).

6 helical membrane passes run 4-24 (LLLIGAITAGGVLIGGGVHFV), 39-59 (VGTGTAMLAAGAGLTGLITAA), 67-87 (LMIMAAGAVGSMLMIGITMLV), 133-153 (FVSGIIGGALGGIGGGLIYWA), 166-186 (MGAAGVAAIFAVGIFFINAVI), and 209-229 (GIVACLIASIVAGALSTLLVY).

Belongs to the MtrD family. The complex is composed of 8 subunits; MtrA, MtrB, MtrC, MtrD, MtrE, MtrF, MtrG and MtrH.

It is found in the cell membrane. The catalysed reaction is 5-methyl-5,6,7,8-tetrahydromethanopterin + coenzyme M + 2 Na(+)(in) = 5,6,7,8-tetrahydromethanopterin + methyl-coenzyme M + 2 Na(+)(out). Its pathway is one-carbon metabolism; methanogenesis from CO(2); methyl-coenzyme M from 5,10-methylene-5,6,7,8-tetrahydromethanopterin: step 2/2. Part of a complex that catalyzes the formation of methyl-coenzyme M and tetrahydromethanopterin from coenzyme M and methyl-tetrahydromethanopterin. This is an energy-conserving, sodium-ion translocating step. The protein is Tetrahydromethanopterin S-methyltransferase subunit D of Methanothermobacter marburgensis (strain ATCC BAA-927 / DSM 2133 / JCM 14651 / NBRC 100331 / OCM 82 / Marburg) (Methanobacterium thermoautotrophicum).